Reading from the N-terminus, the 78-residue chain is U7-lycotoxin-Ls1f (78 aa).

An N-terminal signal peptide occupies residues 1 to 22 (MKLIIFTGLALLLIVSLIDVEA). Positions 23 to 26 (QNEG) are excised as a propeptide.

The protein belongs to the neurotoxin 19 (CSTX) family. 07 (U7-Lctx) subfamily. Post-translationally, contains 4 disulfide bonds. As to expression, expressed by the venom gland.

Its subcellular location is the secreted. The chain is U7-lycotoxin-Ls1f from Lycosa singoriensis (Wolf spider).